The chain runs to 103 residues: UPF0145 protein NT01CX_0170 (103 aa).

This sequence belongs to the UPF0145 family.

The chain is UPF0145 protein NT01CX_0170 from Clostridium novyi (strain NT).